Reading from the N-terminus, the 123-residue chain is uncharacterized protein (123 aa).

The segment at 89-123 (GVGGRKLGSEGQSLSENSEQRSLMRWGCGGSSERR) is disordered. Positions 98–109 (EGQSLSENSEQR) are enriched in polar residues.

This is an uncharacterized protein from Encephalitozoon cuniculi (strain GB-M1) (Microsporidian parasite).